The primary structure comprises 396 residues: Tryptophan synthase beta chain (396 aa).

At lysine 86 the chain carries N6-(pyridoxal phosphate)lysine.

This sequence belongs to the TrpB family. As to quaternary structure, tetramer of two alpha and two beta chains. It depends on pyridoxal 5'-phosphate as a cofactor.

It carries out the reaction (1S,2R)-1-C-(indol-3-yl)glycerol 3-phosphate + L-serine = D-glyceraldehyde 3-phosphate + L-tryptophan + H2O. It participates in amino-acid biosynthesis; L-tryptophan biosynthesis; L-tryptophan from chorismate: step 5/5. Functionally, the beta subunit is responsible for the synthesis of L-tryptophan from indole and L-serine. The polypeptide is Tryptophan synthase beta chain (Francisella philomiragia subsp. philomiragia (strain ATCC 25017 / CCUG 19701 / FSC 153 / O#319-036)).